Consider the following 374-residue polypeptide: Translocating chain-associated membrane protein 1 (374 aa).

The Cytoplasmic segment spans residues Met1–Cys29. A helical transmembrane segment spans residues Val30–Phe50. Over Val51–Ala81 the chain is Lumenal. Residue Asn56 is glycosylated (N-linked (GlcNAc...) asparagine). Residues Thr82–Leu102 form a helical membrane-spanning segment. At Asp103 to Glu121 the chain is on the cytoplasmic side. Residues Ser117–His326 enclose the TLC domain. Residues Ser122 to Ser142 traverse the membrane as a helical segment. Residues Glu143–Asn159 lie on the Lumenal side of the membrane. A helical transmembrane segment spans residues Leu160–Phe180. Topologically, residues Pro181–Asp192 are cytoplasmic. Residues Ile193–Leu213 form a helical membrane-spanning segment. Position 214 (Asn214) is a topological domain, lumenal. A helical membrane pass occupies residues Leu215–Ile235. Residues Ser236–Ser251 are Cytoplasmic-facing. Residues Leu252 to Val272 form a helical membrane-spanning segment. Over Gly273–Arg297 the chain is Lumenal. The helical transmembrane segment at Ile298 to Phe318 threads the bilayer. The Cytoplasmic portion of the chain corresponds to Gln319–Ser374. The tract at residues Ala331 to Ser374 is disordered. The span at Val334–Arg347 shows a compositional bias: basic residues. Over residues Asn352 to Ala363 the composition is skewed to polar residues. Position 365 is a phosphoserine (Ser365).

This sequence belongs to the TRAM family. As to quaternary structure, interacts with SEC61B. May interact with Derlin-1/DERL1. N-glycosylated.

It localises to the endoplasmic reticulum membrane. Involved in the translocation of nascent protein chains into or through the endoplasmic reticulum (ER) membrane by facilitating the proper chain positioning at the SEC61 channel. Regulates the exposure of nascent secretory protein chain to the cytosol during translocation into the ER. May affect the phospholipid bilayer in the vicinity of the lateral gate of the SEC61 channel, thereby facilitating ER protein transport. Intimately associates with transmembrane (TM) domain of nascent membrane proteins during the entire integration process into the ER membrane. Associates with the second TM domain of G-protein-coupled receptor opsin/OPSD nascent chain in the ER membrane, which may facilitate its integration into the membrane. Under conditions of ER stress, participates in the disposal of misfolded ER membrane proteins during the unfolded protein response (UPR), an integrated stress response (ISR) pathway, by selectively retrotranslocating misfolded ER-membrane proteins from the ER into the cytosol where they are ubiquitinated and degraded by the proteasome. This is Translocating chain-associated membrane protein 1 (TRAM1) from Bos taurus (Bovine).